Consider the following 155-residue polypeptide: uncharacterized protein (155 aa).

The segment covering 1 to 14 has biased composition (polar residues); sequence MLTLSGWITTQVPP. The tract at residues 1–44 is disordered; that stretch reads MLTLSGWITTQVPPSSRAAADAKAARTGTAEQAEDPAAGTDAAD. Over residues 17–30 the composition is skewed to low complexity; the sequence is RAAADAKAARTGTA.

This is an uncharacterized protein from Pseudomonas aeruginosa (strain ATCC 15692 / DSM 22644 / CIP 104116 / JCM 14847 / LMG 12228 / 1C / PRS 101 / PAO1).